Reading from the N-terminus, the 50-residue chain is Small integral membrane protein 46 (50 aa).

The chain crosses the membrane as a helical span at residues 15–37 (TTFQLWLQLLLWAHLAVRFLGYL).

It localises to the membrane. This Homo sapiens (Human) protein is Small integral membrane protein 46.